The chain runs to 333 residues: DNA-directed RNA polymerase subunit alpha (333 aa).

Residues 1-234 (MQISVNEFLT…QQLAAFVDLK (234 aa)) form an alpha N-terminal domain (alpha-NTD) region. Positions 248 to 333 (IDPILLRPVD…SLKKDDKATA (86 aa)) are alpha C-terminal domain (alpha-CTD).

It belongs to the RNA polymerase alpha chain family. Homodimer. The RNAP catalytic core consists of 2 alpha, 1 beta, 1 beta' and 1 omega subunit. When a sigma factor is associated with the core the holoenzyme is formed, which can initiate transcription.

It carries out the reaction RNA(n) + a ribonucleoside 5'-triphosphate = RNA(n+1) + diphosphate. Functionally, DNA-dependent RNA polymerase catalyzes the transcription of DNA into RNA using the four ribonucleoside triphosphates as substrates. This Pseudomonas syringae pv. tomato (strain ATCC BAA-871 / DC3000) protein is DNA-directed RNA polymerase subunit alpha.